The sequence spans 191 residues: Dephospho-CoA kinase (191 aa).

Residues 3–191 enclose the DPCK domain; the sequence is AIGITGSYAS…KLIKDLECRV (189 aa). 11 to 16 contacts ATP; it reads ASGKTF.

Belongs to the CoaE family.

Its subcellular location is the cytoplasm. The catalysed reaction is 3'-dephospho-CoA + ATP = ADP + CoA + H(+). Its pathway is cofactor biosynthesis; coenzyme A biosynthesis; CoA from (R)-pantothenate: step 5/5. Functionally, catalyzes the phosphorylation of the 3'-hydroxyl group of dephosphocoenzyme A to form coenzyme A. This is Dephospho-CoA kinase from Rickettsia conorii (strain ATCC VR-613 / Malish 7).